The following is a 239-amino-acid chain: Norbelladine 4'-O-methyltransferase 2 (239 aa).

Residues Val55, Glu77, 79–80, Ser85, Asp103, and Ala132 contribute to the S-adenosyl-L-methionine site; that span reads GV. Asp155 contacts a divalent metal cation. S-adenosyl-L-methionine is bound at residue Asp157. A divalent metal cation is bound by residues Asp181 and Asn182.

It belongs to the class I-like SAM-binding methyltransferase superfamily. Cation-dependent O-methyltransferase family. It depends on Mg(2+) as a cofactor.

It catalyses the reaction norbelladine + S-adenosyl-L-methionine = 4'-O-methylnorbelladine + S-adenosyl-L-homocysteine + H(+). It functions in the pathway alkaloid biosynthesis. 4'-O-methyltransferase converting norbelladine to 4'-O-methylnorbelladine. 4'-O-methylnorbelladine is a precursor to all Amaryllidaceae alkaloids such as galanthamine, lycorine and haemanthamine, and including haemanthamine- and crinamine-type alkaloids, promising anticancer agents. This chain is Norbelladine 4'-O-methyltransferase 2, found in Narcissus aff. pseudonarcissus MK-2014 (Daffodil).